We begin with the raw amino-acid sequence, 138 residues long: Transcription antitermination protein NusB (138 aa).

It belongs to the NusB family.

Involved in transcription antitermination. Required for transcription of ribosomal RNA (rRNA) genes. Binds specifically to the boxA antiterminator sequence of the ribosomal RNA (rrn) operons. This chain is Transcription antitermination protein NusB, found in Geobacter sulfurreducens (strain ATCC 51573 / DSM 12127 / PCA).